A 348-amino-acid chain; its full sequence is Uroporphyrinogen decarboxylase (348 aa).

Substrate-binding positions include 27-31 (RQAGR), Phe-46, Asp-76, Tyr-152, Ser-207, and His-320.

Belongs to the uroporphyrinogen decarboxylase family. Homodimer.

It localises to the cytoplasm. It catalyses the reaction uroporphyrinogen III + 4 H(+) = coproporphyrinogen III + 4 CO2. It functions in the pathway porphyrin-containing compound metabolism; protoporphyrin-IX biosynthesis; coproporphyrinogen-III from 5-aminolevulinate: step 4/4. Catalyzes the decarboxylation of four acetate groups of uroporphyrinogen-III to yield coproporphyrinogen-III. The sequence is that of Uroporphyrinogen decarboxylase from Bacillus cytotoxicus (strain DSM 22905 / CIP 110041 / 391-98 / NVH 391-98).